The following is a 660-amino-acid chain: Pro-secreted protein ORF2 (660 aa).

A signal peptide spans 1 to 19 (MGPRPILLLFLMFLPMLLA). Disordered stretches follow at residues 20–43 (PPPG…GFWG) and 66–127 (VTAA…DVDS). Residues 28-33 (RRRGRR) carry the Nuclear localization signal motif. The span at 92-116 (QRPAAASRRRPTTAGAAPLTAVAPA) shows a compositional bias: low complexity. N-linked (GlcNAc...) asparagine; by host glycans are attached at residues Asn-137 and Asn-310. The tract at residues 368–394 (IALTLFNLADTLLGGLPTELISSAGGQ) is particle formation. The N-linked (GlcNAc...) asparagine; by host glycan is linked to Asn-562. An oligomerization region spans residues 585-610 (TTSLGAGPVSISAVAVLGPHSALALL).

The protein belongs to the hepevirus capsid protein family. As to quaternary structure, homodimer. Self-assembles to form the capsid. The capsid is dominated by dimers that define the 30 morphological units. Interacts with phosphorylated protein ORF3. Interacts with host TMEM134. Interacts with host ASGR1 and ASGR2; these interactions facilitate infection of host hepatocytes. Post-translationally, cleaved by host protease in the N-terminus. In terms of processing, N-glycosylated. Not N-glycosylated. The C-terminus of the capsid protein ORF2 is truncated in non-enveloped virions shedded in feces, probably due to host proteases.

The protein resides in the secreted. The protein localises to the virion. It is found in the host cytoplasm. Its subcellular location is the host endoplasmic reticulum. It localises to the host Golgi apparatus. The protein resides in the host cell surface. In terms of biological role, plays a role in the inhibition of host antibody-mediated neutralization without blocking viral cell entry. Functionally, forms an icosahedral capsid with a T=1 symmetry and a 34 nm diameter. The capsid is composed of 60 copies linked to each other. Binds to the 5' end of the genomic RNA to mediate genome encapsidation. Binds to heparin surface proteoglycans (HSPGs) to mediate viral entry. Additionally, the interactions with host ASGR1 and ASGR2 facilitate viral infection of hepatocytes. Inhibits IFN production by blocking host TBK1-induced IRF3 phosphorylation. The nuclear form probably modulates host gene expression. This is Pro-secreted protein ORF2 from Bandicota bengalensis (lesser bandicoot rat).